Here is a 160-residue protein sequence, read N- to C-terminus: MTQDISLSFYKPEHLPELQSFTLTNDDKRFTSLPKEVLSQALGIQDRYPVVILKDDLPVGFFILHASKETLASYSNNPFALLLSSLSLTAVHHGKGYAKKAMLLLPAFVSGYFPWCDEIILAVNHLNIRAKHLYMKSGFLDKGRRRIGPLGEQLILHHFL.

Residues 5–160 (ISLSFYKPEH…GEQLILHHFL (156 aa)) enclose the N-acetyltransferase domain.

This is an uncharacterized protein from Bacillus subtilis (strain 168).